We begin with the raw amino-acid sequence, 744 residues long: Probable ubiquitin carboxyl-terminal hydrolase MINDY-4 (744 aa).

S143, S220, and S224 each carry phosphoserine. Residues G211–K358 form a disordered region. A compositionally biased stretch (low complexity) spans V265–P277. Over residues N290–S299 the composition is skewed to polar residues. A Phosphoserine modification is found at S295. Basic and acidic residues predominate over residues Q300–S310. The active-site Nucleophile is the C443. The active-site Proton acceptor is the H664.

It belongs to the MINDY deubiquitinase family. FAM188 subfamily.

It carries out the reaction Thiol-dependent hydrolysis of ester, thioester, amide, peptide and isopeptide bonds formed by the C-terminal Gly of ubiquitin (a 76-residue protein attached to proteins as an intracellular targeting signal).. Functionally, probable hydrolase that can remove 'Lys-48'-linked conjugated ubiquitin from proteins. In Mus musculus (Mouse), this protein is Probable ubiquitin carboxyl-terminal hydrolase MINDY-4 (Mindy4).